We begin with the raw amino-acid sequence, 184 residues long: HVA22-like protein c (184 aa).

The next 3 membrane-spanning stretches (helical) occupy residues 13 to 33 (VLIK…YPLY), 51 to 71 (LTYW…SKPL), and 73 to 93 (WFPI…LPQF).

The protein belongs to the DP1 family. Predominantly expressed in flower buds and stem.

The protein localises to the membrane. This is HVA22-like protein c (HVA22C) from Arabidopsis thaliana (Mouse-ear cress).